Here is a 388-residue protein sequence, read N- to C-terminus: MNQHLNGIPAHGGHLINRIATPAERQEFIEKAESLPKIQLDKRALSDLEMIAIGGFSPLNGFMDKDDYESVVVDMRLKNGLPWSIPVTLSVSEEVADSIKEGSWVGLSSPEGEFAGVLELTQKFHYNKAHEAINVYSTQEIKHPGVKVLYDAGPVNLAGPVWLLERHPHPLFPKYQIDPAESRKLFQEKNWKTIVGFQTRNPIHRAHEYIQKCALEVVDGLFLHPLVGATKSDDIPADVRMRCYEIMLEKYFPENRVMMAINPSAMRYAGPREAIFHALVRKNYGCTHFIVGRDHAGVGDYYGTYDAQYIFDEFEPRELDIVPMKFEHAFYCTRTQGMATSKTSPSTGEERIHLSGTKVREMLRRGELPPPEFSRPEVAAELAKAMKI.

Belongs to the sulfate adenylyltransferase family.

The catalysed reaction is sulfate + ATP + H(+) = adenosine 5'-phosphosulfate + diphosphate. The protein operates within sulfur metabolism; hydrogen sulfide biosynthesis; sulfite from sulfate: step 1/3. The protein is Sulfate adenylyltransferase of Trichodesmium erythraeum (strain IMS101).